Consider the following 307-residue polypeptide: tRNA pseudouridine synthase B (307 aa).

Aspartate 41 serves as the catalytic Nucleophile.

This sequence belongs to the pseudouridine synthase TruB family. Type 1 subfamily.

The catalysed reaction is uridine(55) in tRNA = pseudouridine(55) in tRNA. Its function is as follows. Responsible for synthesis of pseudouridine from uracil-55 in the psi GC loop of transfer RNAs. The protein is tRNA pseudouridine synthase B of Prochlorococcus marinus (strain MIT 9312).